Consider the following 275-residue polypeptide: Large ribosomal subunit protein uL2 (275 aa).

A disordered region spans residues 222 to 275; the sequence is GVAMNPVDHPHGGGEGRNKGRHPTSPWGQKSKGLKTRHNKRTDNMIIRRRAKKK. Basic and acidic residues predominate over residues 229–239; the sequence is DHPHGGGEGRN.

This sequence belongs to the universal ribosomal protein uL2 family. Part of the 50S ribosomal subunit. Forms a bridge to the 30S subunit in the 70S ribosome.

Functionally, one of the primary rRNA binding proteins. Required for association of the 30S and 50S subunits to form the 70S ribosome, for tRNA binding and peptide bond formation. It has been suggested to have peptidyltransferase activity; this is somewhat controversial. Makes several contacts with the 16S rRNA in the 70S ribosome. The chain is Large ribosomal subunit protein uL2 from Psychrobacter cryohalolentis (strain ATCC BAA-1226 / DSM 17306 / VKM B-2378 / K5).